Reading from the N-terminus, the 174-residue chain is Ribosome maturation factor RimM (174 aa).

The region spanning 97–169 is the PRC barrel domain; it reads PDTYYDHQLE…ILEIDPPDGL (73 aa).

Belongs to the RimM family. In terms of assembly, binds ribosomal protein uS19.

The protein localises to the cytoplasm. Its function is as follows. An accessory protein needed during the final step in the assembly of 30S ribosomal subunit, possibly for assembly of the head region. Essential for efficient processing of 16S rRNA. May be needed both before and after RbfA during the maturation of 16S rRNA. It has affinity for free ribosomal 30S subunits but not for 70S ribosomes. This Mycobacterium ulcerans (strain Agy99) protein is Ribosome maturation factor RimM.